Reading from the N-terminus, the 543-residue chain is CTP synthase (543 aa).

The tract at residues 1-265 (MARYIFITGG…DGEVLRHFGL (265 aa)) is amidoligase domain. A CTP-binding site is contributed by S13. S13 serves as a coordination point for UTP. An ATP-binding site is contributed by 14 to 19 (SLGKGL). Y54 lines the L-glutamine pocket. D71 serves as a coordination point for ATP. The Mg(2+) site is built by D71 and E139. CTP contacts are provided by residues 146-148 (DIE), 186-191 (KTKPTQ), and K222. UTP-binding positions include 186–191 (KTKPTQ) and K222. Positions 290-542 (TIGVVGKYVG…IAAAVKQARL (253 aa)) constitute a Glutamine amidotransferase type-1 domain. Position 354 (G354) interacts with L-glutamine. C381 serves as the catalytic Nucleophile; for glutamine hydrolysis. L-glutamine contacts are provided by residues 382-385 (LGMQ), E405, and R470. Residues H515 and E517 contribute to the active site.

It belongs to the CTP synthase family. Homotetramer.

It catalyses the reaction UTP + L-glutamine + ATP + H2O = CTP + L-glutamate + ADP + phosphate + 2 H(+). The catalysed reaction is L-glutamine + H2O = L-glutamate + NH4(+). The enzyme catalyses UTP + NH4(+) + ATP = CTP + ADP + phosphate + 2 H(+). The protein operates within pyrimidine metabolism; CTP biosynthesis via de novo pathway; CTP from UDP: step 2/2. Allosterically activated by GTP, when glutamine is the substrate; GTP has no effect on the reaction when ammonia is the substrate. The allosteric effector GTP functions by stabilizing the protein conformation that binds the tetrahedral intermediate(s) formed during glutamine hydrolysis. Inhibited by the product CTP, via allosteric rather than competitive inhibition. Catalyzes the ATP-dependent amination of UTP to CTP with either L-glutamine or ammonia as the source of nitrogen. Regulates intracellular CTP levels through interactions with the four ribonucleotide triphosphates. In Novosphingobium aromaticivorans (strain ATCC 700278 / DSM 12444 / CCUG 56034 / CIP 105152 / NBRC 16084 / F199), this protein is CTP synthase.